The primary structure comprises 303 residues: 1D-myo-inositol 2-acetamido-2-deoxy-alpha-D-glucopyranoside deacetylase 1 (303 aa).

Zn(2+) is bound by residues His-15, Asp-18, and His-157.

It belongs to the MshB deacetylase family. Requires Zn(2+) as cofactor.

It catalyses the reaction 1D-myo-inositol 2-acetamido-2-deoxy-alpha-D-glucopyranoside + H2O = 1D-myo-inositol 2-amino-2-deoxy-alpha-D-glucopyranoside + acetate. Its function is as follows. Catalyzes the deacetylation of 1D-myo-inositol 2-acetamido-2-deoxy-alpha-D-glucopyranoside (GlcNAc-Ins) in the mycothiol biosynthesis pathway. This Saccharopolyspora erythraea (strain ATCC 11635 / DSM 40517 / JCM 4748 / NBRC 13426 / NCIMB 8594 / NRRL 2338) protein is 1D-myo-inositol 2-acetamido-2-deoxy-alpha-D-glucopyranoside deacetylase 1.